We begin with the raw amino-acid sequence, 289 residues long: Aquaporin-2 (289 aa).

Residues 1–36 (MSNESNDLEKNISHLDPTGVDNAYIPPEQPETKHSR) are disordered. The Cytoplasmic segment spans residues 1–47 (MSNESNDLEKNISHLDPTGVDNAYIPPEQPETKHSRFNIDRDTLRNH). Residues 48-68 (FIAAVGEFCGTFMFLWCAYVI) form a helical membrane-spanning segment. Residues 69–90 (CNVANHDVALTTEPEGSHPGQL) lie on the Extracellular side of the membrane. Residues 91–111 (IMIALGFGFSVMFSIWCFAGV) form a helical membrane-spanning segment. The Cytoplasmic portion of the chain corresponds to 112 to 135 (SGGALNPAVSLSLCLARAISPARC). An NPA 1 motif is present at residues 117-119 (NPA). The chain crosses the membrane as a helical span at residues 136–156 (VVMWFPQIIAGMAAGGAASAM). Residues 157-175 (TPGKVLFTNALGLGCSRSR) lie on the Extracellular side of the membrane. Residues 176–196 (GLFLEMFGTAVLCLTVLMTAV) form a helical membrane-spanning segment. The Cytoplasmic portion of the chain corresponds to 197-202 (EKRETN). A helical membrane pass occupies residues 203–223 (FMAALPIGISLFMAHMALTGY). Residues 224–247 (TGTGVNPARSLGAAVAARYFPHYH) lie on the Extracellular side of the membrane. The NPA 2 signature appears at 229 to 231 (NPA). The helical transmembrane segment at 248-268 (WIYWIGPLLGAFLAWSVWQLL) threads the bilayer. The Cytoplasmic portion of the chain corresponds to 269 to 289 (QILDYTTYVNAEKAAGQKKED).

The protein belongs to the MIP/aquaporin (TC 1.A.8) family.

The protein localises to the endoplasmic reticulum membrane. The protein resides in the cell membrane. Functionally, water channel required to facilitate the transport of water across membranes. Involved in freeze tolerance, osmotolerance and cell flocculation in liquid cultures. Is non-functional in most laboratory strains. In Saccharomyces cerevisiae (Baker's yeast), this protein is Aquaporin-2 (AQY2).